A 256-amino-acid chain; its full sequence is uncharacterized protein (256 aa).

Residues 1-22 (MGYLKRFALYISVMILIFAIAG) form the signal peptide. A lipid anchor (N-palmitoyl cysteine) is attached at Cys23. Cys23 is lipidated: S-diacylglycerol cysteine.

This sequence belongs to the staphylococcal tandem lipoprotein family.

The protein localises to the cell membrane. This is an uncharacterized protein from Staphylococcus aureus (strain COL).